The sequence spans 184 residues: Large ribosomal subunit protein uL15 (184 aa).

Positions Met-1–Lys-45 are disordered. Gly residues predominate over residues Arg-21–Asn-35.

The protein belongs to the universal ribosomal protein uL15 family. Part of the 50S ribosomal subunit.

Binds to the 23S rRNA. The polypeptide is Large ribosomal subunit protein uL15 (Pelodictyon phaeoclathratiforme (strain DSM 5477 / BU-1)).